A 430-amino-acid polypeptide reads, in one-letter code: UPF0597 protein DSY1109 (430 aa).

The protein belongs to the UPF0597 family.

This Desulfitobacterium hafniense (strain Y51) protein is UPF0597 protein DSY1109.